A 185-amino-acid chain; its full sequence is Probable chorismate pyruvate-lyase (185 aa).

Positions 80, 118, and 170 each coordinate substrate.

Belongs to the UbiC family.

It is found in the cytoplasm. It carries out the reaction chorismate = 4-hydroxybenzoate + pyruvate. Its pathway is cofactor biosynthesis; ubiquinone biosynthesis. Its function is as follows. Removes the pyruvyl group from chorismate, with concomitant aromatization of the ring, to provide 4-hydroxybenzoate (4HB) for the ubiquinone pathway. This is Probable chorismate pyruvate-lyase from Pseudomonas putida (strain ATCC 47054 / DSM 6125 / CFBP 8728 / NCIMB 11950 / KT2440).